The sequence spans 396 residues: AGSYLLEELFEGHLEKECWEEICVYEEAREVFEDDETTDEFWRTYMGGSPCASQPCLNNGSCQDSIRGYACTCAPGYEGPNCAFAESECHPLRLDGCQHFCYPGPESYTCSCARGHKLGQDRRSCLPHDRCACGTLGPECCQRPQGSQQNLLPFPWQVKLTNSEGKDFCGGVLIQDNFVLTTATCSLLYANISVKTRSHFRLHVRGVHVHTRFEADTGHNDVALLDLARPVRCPDAGRPVCTADADFADSVLLPQPGVLGGWTLRGREMVPLRLRVTHVEPAECGRALNATVTTRTSCERGAAAGAARWVAGGAVVREHRGAWFLTGLLGAAPPEGPGPLLLIKVPRYALWLRQVTQQPSRASPRGDRGQGRDGEPVPGDRGGRWAPTALPPGPLV.

The 46-residue stretch at 1–46 folds into the Gla domain; sequence AGSYLLEELFEGHLEKECWEEICVYEEAREVFEDDETTDEFWRTYM. 4-carboxyglutamate is present on residues Glu7, Glu8, Glu11, Glu15, Glu17, Glu20, Glu21, Glu26, Glu27, Glu30, Glu33, Glu36, and Glu40. A disulfide bridge links Cys18 with Cys23. EGF-like domains are found at residues 47-83 and 85-126; these read GGSP…PNCA and AESE…RSCL. 7 disulfides stabilise this stretch: Cys51-Cys62, Cys56-Cys71, Cys73-Cys82, Cys89-Cys101, Cys97-Cys110, Cys112-Cys125, and Cys169-Cys185. Residue Ser53 is glycosylated (O-linked (Glc...) serine). Asn59 carries N-linked (GlcNAc...) asparagine glycosylation. At Asp64 the chain carries (3R)-3-hydroxyaspartate. In terms of domain architecture, Peptidase S1 spans 135–357; it reads TLGPECCQRP…YALWLRQVTQ (223 aa). 2 N-linked (GlcNAc...) asparagine glycosylation sites follow: Asn191 and Asn289. The cysteines at positions 284 and 298 are disulfide-linked. The segment at 356 to 396 is disordered; that stretch reads TQQPSRASPRGDRGQGRDGEPVPGDRGGRWAPTALPPGPLV. The segment covering 364–375 has biased composition (basic and acidic residues); sequence PRGDRGQGRDGE. An O-linked (GalNAc...) threonine glycan is attached at Thr388.

This sequence belongs to the peptidase S1 family. The iron and 2-oxoglutarate dependent 3-hydroxylation of aspartate and asparagine is (R) stereospecific within EGF domains. Plasma.

It localises to the secreted. In terms of biological role, inhibits activity of the coagulation protease factor Xa in the presence of SERPINA10, calcium and phospholipids. Appears to assist hemostasis by binding thrombin and promoting its association with phospholipid vesicles. This is Vitamin K-dependent protein Z (PROZ) from Bos taurus (Bovine).